Consider the following 1009-residue polypeptide: Probable beta-galactosidase B (1009 aa).

The signal sequence occupies residues 1-21 (MAQLFTKIIVYFLLFASPLLA). N-linked (GlcNAc...) asparagine glycosylation occurs at Asn-28. Substrate is bound at residue Tyr-85. Asn-95 carries N-linked (GlcNAc...) asparagine glycosylation. Substrate is bound by residues Asn-130, Ala-131, Glu-132, and Asn-190. Glu-191 (proton donor) is an active-site residue. A glycan (N-linked (GlcNAc...) asparagine) is linked at Asn-247. Tyr-260 serves as a coordination point for substrate. An intrachain disulfide couples Cys-266 to Cys-319. Glu-303 serves as the catalytic Nucleophile. Tyr-368 provides a ligand contact to substrate. N-linked (GlcNAc...) asparagine glycans are attached at residues Asn-375, Asn-406, Asn-427, Asn-451, Asn-682, Asn-740, Asn-771, Asn-784, Asn-826, and Asn-883.

Belongs to the glycosyl hydrolase 35 family.

Its subcellular location is the secreted. The catalysed reaction is Hydrolysis of terminal non-reducing beta-D-galactose residues in beta-D-galactosides.. In terms of biological role, cleaves beta-linked terminal galactosyl residues from gangliosides, glycoproteins, and glycosaminoglycans. This Talaromyces marneffei (strain ATCC 18224 / CBS 334.59 / QM 7333) (Penicillium marneffei) protein is Probable beta-galactosidase B (lacB).